Consider the following 180-residue polypeptide: Negative modulator of initiation of replication (180 aa).

3 interaction with DNA regions span residues 86–87, 115–119, and 149–155; these read AV, RTRVY, and NTNTGRK.

The protein belongs to the SeqA family. Homodimer. Polymerizes to form helical filaments.

The protein localises to the cytoplasm. Negative regulator of replication initiation, which contributes to regulation of DNA replication and ensures that replication initiation occurs exactly once per chromosome per cell cycle. Binds to pairs of hemimethylated GATC sequences in the oriC region, thus preventing assembly of replication proteins and re-initiation at newly replicated origins. Repression is relieved when the region becomes fully methylated. This is Negative modulator of initiation of replication from Enterobacter sp. (strain 638).